Here is a 305-residue protein sequence, read N- to C-terminus: Protoheme IX farnesyltransferase (305 aa).

The next 9 membrane-spanning stretches (helical) occupy residues 29–49, 55–75, 101–121, 123–143, 151–171, 177–197, 219–241, 246–268, and 283–303; these read LIVFCAAIGMLLAVPGAPGLA, LWATLGIWLVASAAAAFNCLI, ALIFSAVLCSAGMAVLHEAVN, LTAWLTLGTFVGYAVIYTVVL, IVIGGISGAMPPLLGWAAMTG, GLILCLIIFLWTPPHFWALAL, FTRLQILLYTFVLLAGTLLPFVQ, WLYLAAAFVLGLRFIHYAWRLWR, and IWHLSLLFAALLVDHYTQDLL.

This sequence belongs to the UbiA prenyltransferase family. Protoheme IX farnesyltransferase subfamily.

It is found in the cell inner membrane. It catalyses the reaction heme b + (2E,6E)-farnesyl diphosphate + H2O = Fe(II)-heme o + diphosphate. Its pathway is porphyrin-containing compound metabolism; heme O biosynthesis; heme O from protoheme: step 1/1. In terms of biological role, converts heme B (protoheme IX) to heme O by substitution of the vinyl group on carbon 2 of heme B porphyrin ring with a hydroxyethyl farnesyl side group. The chain is Protoheme IX farnesyltransferase from Leptothrix cholodnii (strain ATCC 51168 / LMG 8142 / SP-6) (Leptothrix discophora (strain SP-6)).